Consider the following 185-residue polypeptide: Threonylcarbamoyl-AMP synthase (185 aa).

Residues 1–185 (MDNFEQVLNA…AKTSQILRQG (185 aa)) enclose the YrdC-like domain. Residues 163–185 (ETSGRDKPSEIRDAKTSQILRQG) are disordered. A compositionally biased stretch (basic and acidic residues) spans 164–177 (TSGRDKPSEIRDAK).

The protein belongs to the SUA5 family. TsaC subfamily.

Its subcellular location is the cytoplasm. It carries out the reaction L-threonine + hydrogencarbonate + ATP = L-threonylcarbamoyladenylate + diphosphate + H2O. Required for the formation of a threonylcarbamoyl group on adenosine at position 37 (t(6)A37) in tRNAs that read codons beginning with adenine. Catalyzes the conversion of L-threonine, HCO(3)(-)/CO(2) and ATP to give threonylcarbamoyl-AMP (TC-AMP) as the acyladenylate intermediate, with the release of diphosphate. The protein is Threonylcarbamoyl-AMP synthase of Vibrio parahaemolyticus serotype O3:K6 (strain RIMD 2210633).